The chain runs to 251 residues: Zinc import ATP-binding protein ZnuC (251 aa).

Positions 5–220 constitute an ABC transporter domain; sequence VSLENVSVSF…PEFISMFGPR (216 aa). An ATP-binding site is contributed by 37 to 44; the sequence is GPNGAGKS.

This sequence belongs to the ABC transporter superfamily. Zinc importer (TC 3.A.1.15.5) family. In terms of assembly, the complex is composed of two ATP-binding proteins (ZnuC), two transmembrane proteins (ZnuB) and a solute-binding protein (ZnuA).

Its subcellular location is the cell inner membrane. The catalysed reaction is Zn(2+)(out) + ATP(in) + H2O(in) = Zn(2+)(in) + ADP(in) + phosphate(in) + H(+)(in). In terms of biological role, part of the ABC transporter complex ZnuABC involved in zinc import. Responsible for energy coupling to the transport system. This Shigella flexneri serotype 5b (strain 8401) protein is Zinc import ATP-binding protein ZnuC.